Reading from the N-terminus, the 212-residue chain is Uridine kinase (212 aa).

Position 13-20 (13-20) interacts with ATP; that stretch reads GGSGSGKT.

It belongs to the uridine kinase family.

Its subcellular location is the cytoplasm. The enzyme catalyses uridine + ATP = UMP + ADP + H(+). It carries out the reaction cytidine + ATP = CMP + ADP + H(+). The protein operates within pyrimidine metabolism; CTP biosynthesis via salvage pathway; CTP from cytidine: step 1/3. It functions in the pathway pyrimidine metabolism; UMP biosynthesis via salvage pathway; UMP from uridine: step 1/1. This is Uridine kinase from Bacillus cereus (strain B4264).